Here is a 28-residue protein sequence, read N- to C-terminus: Potassium channel toxin alpha-KTx 9.10 (28 aa).

Disulfide bonds link Cys-3–Cys-19, Cys-6–Cys-24, and Cys-10–Cys-26.

This sequence belongs to the short scorpion toxin superfamily. Potassium channel inhibitor family. Alpha-KTx 09 subfamily. As to expression, expressed by the venom gland.

The protein localises to the secreted. Functionally, blocks Shaker potassium channels. This chain is Potassium channel toxin alpha-KTx 9.10, found in Mesobuthus eupeus (Lesser Asian scorpion).